Here is a 395-residue protein sequence, read N- to C-terminus: Xylose isomerase (395 aa).

Residues His-54 and Glu-57 contribute to the active site. Residues 80–108 form a disordered region; sequence AVPAGAGRDRHEGADGDDEPVHAPGCSRD. Mg(2+) is bound by residues Glu-189, Glu-225, His-228, Asp-253, Asp-263, Asp-265, and Asp-295.

This sequence belongs to the xylose isomerase family. In terms of assembly, homotetramer. Mg(2+) is required as a cofactor.

The protein localises to the cytoplasm. The catalysed reaction is alpha-D-xylose = alpha-D-xylulofuranose. In Streptomyces lividans, this protein is Xylose isomerase.